Consider the following 203-residue polypeptide: Pro-FMRFamide-related neuropeptide VF (203 aa).

The N-terminal stretch at 1–26 (MEIISSKRFILLTLATSSFLTSNTLC) is a signal peptide. Positions 27–57 (SDELMMPHFHSKEGYGKYYQLRGIPKGVKER) are excised as a propeptide. Phe-94 is subject to Phenylalanine amide. A propeptide spanning residues 97–106 (NIEDRRSPRA) is cleaved from the precursor. Phe-125 bears the Phenylalanine amide mark. Positions 128-203 (TTARRITKTL…QPVLQGAMKL (76 aa)) are excised as a propeptide. The tract at residues 161-186 (HQEIQSPGQEQPRKRVFTETDDAERK) is disordered. Over residues 171 to 186 (QPRKRVFTETDDAERK) the composition is skewed to basic and acidic residues.

This sequence belongs to the FARP (FMRFamide related peptide) family. Isoform 1 is expressed at high levels in the hypothalamus and eye. Isoform 2 is specifically expressed in a region between the dorsomedial hypothalamic and ventromedial hypothalamic nuclei.

The protein resides in the secreted. Functionally, efficiently inhibits forskolin-induced production of cAMP. Acts as a potent negative regulator of gonadotropin synthesis and secretion. Induces secretion of prolactin. In terms of biological role, efficiently inhibits forskolin-induced production of cAMP. Blocks morphine-induced analgesia. In Rattus norvegicus (Rat), this protein is Pro-FMRFamide-related neuropeptide VF (Npvf).